A 347-amino-acid chain; its full sequence is Adenine deaminase (347 aa).

Zn(2+) contacts are provided by His16, His18, and His204. Glu207 acts as the Proton donor in catalysis. Asp285 contributes to the Zn(2+) binding site. Asp286 is a binding site for substrate.

The protein belongs to the metallo-dependent hydrolases superfamily. Adenosine and AMP deaminases family. Adenine deaminase type 2 subfamily. Requires Zn(2+) as cofactor. In terms of processing, probably ubiquitinated when cells enter quiescence in response to nutrient limitation, since it is specifically degraded via a process requiring the F-box protein SAF1 and components of the SKP1-Cullin-F-box complex.

The protein localises to the cytoplasm. It is found in the nucleus. It carries out the reaction adenine + H2O + H(+) = hypoxanthine + NH4(+). Catalyzes the hydrolytic deamination of adenine to hypoxanthine. Plays an important role in the purine salvage pathway and in nitrogen catabolism. Also exhibits a low activity towards N(6)-substituted adenines that are commonly known as the plant hormones cytokinins. The sequence is that of Adenine deaminase from Saccharomyces cerevisiae (strain ATCC 204508 / S288c) (Baker's yeast).